Reading from the N-terminus, the 846-residue chain is MAP7 domain-containing protein 1 (846 aa).

Disordered regions lie at residues 1–153 (MESG…ERAK) and 186–210 (EQRLKAEQRRAALEERQRQKLEKNK). The span at 24–41 (EPRPSPEGDPSPPPPPTP) shows a compositional bias: pro residues. Phosphothreonine occurs at positions 49 and 53. Ser-95 bears the Phosphoserine mark. Thr-99 is subject to Phosphothreonine. Low complexity predominate over residues 113–123 (RSSQPSPTTVP). Phosphoserine is present on residues Ser-115 and Ser-118. Thr-120 carries the phosphothreonine modification. Ser-125 and Ser-127 each carry phosphoserine. A coiled-coil region spans residues 130-224 (AKQDVKKAGE…AAIQRSVKKT (95 aa)). Residues 132–153 (QDVKKAGERHKLAKERREERAK) show a composition bias toward basic and acidic residues. A phosphoserine mark is found at Ser-256, Ser-275, Ser-315, Ser-368, and Ser-401. A disordered region spans residues 318–816 (TLPRNGRDQG…KGTAGDKSLG (499 aa)). The span at 407 to 437 (RRLEATPVQKKEKKDKERENEKEKSALARER) shows a compositional bias: basic and acidic residues. A coiled-coil region spans residues 414–443 (VQKKEKKDKERENEKEKSALARERNLKKRQ). Ser-444, Ser-448, Ser-454, and Ser-460 each carry phosphoserine. The segment covering 460 to 471 (SPKSKARPSSPS) has biased composition (low complexity). Lys-462 participates in a covalent cross-link: Glycyl lysine isopeptide (Lys-Gly) (interchain with G-Cter in SUMO2). Phosphoserine occurs at positions 479 and 496. Positions 479–497 (SPCPSPGPGHALPPKPPSP) are enriched in pro residues. Residues 523 to 539 (PEDKNHRKSRAAEEKEP) are compositionally biased toward basic and acidic residues. A compositionally biased stretch (pro residues) spans 542–556 (PASPAPSPVPSPTPA). Phosphoserine is present on residues Ser-544, Ser-548, and Ser-552. At Thr-554 the chain carries Phosphothreonine. The segment covering 568–579 (PAETAVPAVPAA) has biased composition (low complexity). Positions 599–740 (TTDREEATRL…AETKKQDAKE (142 aa)) form a coiled coil. The segment covering 600-740 (TDREEATRLL…AETKKQDAKE (141 aa)) has biased composition (basic and acidic residues). Thr-818 bears the Phosphothreonine mark.

This sequence belongs to the MAP7 family.

Its subcellular location is the cytoplasm. The protein resides in the cytoskeleton. The protein localises to the spindle. It is found in the microtubule organizing center. It localises to the centrosome. Its subcellular location is the midbody. Microtubule-stabilizing protein involved in the control of cell motility and neurite outgrowth. Facilitate microtubule stabilization through the maintenance of acetylated stable microtubules. The protein is MAP7 domain-containing protein 1 (Map7d1) of Mus musculus (Mouse).